The primary structure comprises 345 residues: PI-PLC X domain-containing protein 1 (345 aa).

Positions 52-228 (QLWDVPLHHL…QVIVSYEDEA (177 aa)) constitute a PI-PLC X-box domain.

In terms of tissue distribution, expressed at highest levels in brain and kidney. Also detected in stomach, thymus and skeletal muscle.

The protein localises to the cytoplasm. The chain is PI-PLC X domain-containing protein 1 (Plcxd1) from Mus musculus (Mouse).